The chain runs to 65 residues: Large ribosomal subunit protein bL35 (65 aa).

The interval 1-46 is disordered; the sequence is MPKMKTRQSAAKRYEVTGSGKLRRRRAGKNHLLQHKSAARKRSLST. The span at 21–44 shows a compositional bias: basic residues; the sequence is KLRRRRAGKNHLLQHKSAARKRSL.

The protein belongs to the bacterial ribosomal protein bL35 family.

The chain is Large ribosomal subunit protein bL35 from Gloeobacter violaceus (strain ATCC 29082 / PCC 7421).